Reading from the N-terminus, the 196-residue chain is dITP/XTP pyrophosphatase (196 aa).

7-12 contributes to the substrate binding site; that stretch reads TGNAGK. The Mg(2+) site is built by glutamate 39 and aspartate 68. Aspartate 68 acts as the Proton acceptor in catalysis. Residues serine 69, 153–156, lysine 176, and 181–182 contribute to the substrate site; these read HGYD and HR.

Belongs to the HAM1 NTPase family. As to quaternary structure, homodimer. It depends on Mg(2+) as a cofactor.

The catalysed reaction is XTP + H2O = XMP + diphosphate + H(+). It catalyses the reaction dITP + H2O = dIMP + diphosphate + H(+). The enzyme catalyses ITP + H2O = IMP + diphosphate + H(+). Pyrophosphatase that catalyzes the hydrolysis of nucleoside triphosphates to their monophosphate derivatives, with a high preference for the non-canonical purine nucleotides XTP (xanthosine triphosphate), dITP (deoxyinosine triphosphate) and ITP. Seems to function as a house-cleaning enzyme that removes non-canonical purine nucleotides from the nucleotide pool, thus preventing their incorporation into DNA/RNA and avoiding chromosomal lesions. The sequence is that of dITP/XTP pyrophosphatase from Thioalkalivibrio sulfidiphilus (strain HL-EbGR7).